The following is a 476-amino-acid chain: UDP-N-acetylmuramate--L-alanine ligase (476 aa).

Position 125 to 131 (125 to 131) interacts with ATP; sequence GTHGKTT.

This sequence belongs to the MurCDEF family.

It localises to the cytoplasm. The catalysed reaction is UDP-N-acetyl-alpha-D-muramate + L-alanine + ATP = UDP-N-acetyl-alpha-D-muramoyl-L-alanine + ADP + phosphate + H(+). Its pathway is cell wall biogenesis; peptidoglycan biosynthesis. Its function is as follows. Cell wall formation. The polypeptide is UDP-N-acetylmuramate--L-alanine ligase (Actinobacillus succinogenes (strain ATCC 55618 / DSM 22257 / CCUG 43843 / 130Z)).